Reading from the N-terminus, the 437-residue chain is Amino-acid acetyltransferase (437 aa).

One can recognise an N-acetyltransferase domain in the interval 289 to 437 (ECIRLATSFD…SKVLMLALDN (149 aa)).

Belongs to the acetyltransferase family. ArgA subfamily.

It localises to the cytoplasm. It catalyses the reaction L-glutamate + acetyl-CoA = N-acetyl-L-glutamate + CoA + H(+). It functions in the pathway amino-acid biosynthesis; L-arginine biosynthesis; N(2)-acetyl-L-ornithine from L-glutamate: step 1/4. This Haemophilus ducreyi (strain 35000HP / ATCC 700724) protein is Amino-acid acetyltransferase.